Here is a 1026-residue protein sequence, read N- to C-terminus: Translation initiation factor IF-2, chloroplastic (1026 aa).

The N-terminal 63 residues, 1–63 (MPSMLVLVGT…KKWLCRYSVS (63 aa)), are a transit peptide targeting the chloroplast. Residues 158–173 (AEKLEIPKPGNKEGGE) are compositionally biased toward basic and acidic residues. Disordered stretches follow at residues 158–208 (AEKL…TMKS), 230–284 (FNRG…PPVK), and 300–393 (VSEE…KWSK). A compositionally biased stretch (polar residues) spans 178-194 (SQPSANSSNSRNGSYAN). Residues 254 to 269 (LAPPQPPFRPQPPVRP) show a composition bias toward pro residues. Positions 306–317 (SSVKSKERKPIL) are enriched in basic and acidic residues. Residues 384–393 (SGRKGRKWSK) show a composition bias toward basic residues. In terms of domain architecture, tr-type G spans 499–672 (DRPPVITIMG…MLVAELQELK (174 aa)). Residues 508-515 (GHVDHGKT) are G1. 508–515 (GHVDHGKT) is a GTP binding site. Residues 533-537 (GITQG) are G2. The interval 558–561 (DTPG) is G3. GTP is bound by residues 558 to 562 (DTPGH) and 612 to 615 (NKID). Positions 612–615 (NKID) are G4. Residues 648-650 (SAL) are G5.

The protein belongs to the TRAFAC class translation factor GTPase superfamily. Classic translation factor GTPase family. IF-2 subfamily.

The protein resides in the plastid. It is found in the chloroplast. Functionally, one of the essential components for the initiation of protein synthesis. Protects formylmethionyl-tRNA from spontaneous hydrolysis and promotes its binding to the 30S ribosomal subunits. Also involved in the hydrolysis of GTP during the formation of the 70S ribosomal complex. This chain is Translation initiation factor IF-2, chloroplastic, found in Arabidopsis thaliana (Mouse-ear cress).